The chain runs to 339 residues: MRVYYDSDADVNLIKAKKVAVVGYGSQGHAHALNLKESGVKELVVALRKGSAAVAKAEAAGLRVMTPEEAAAWADVVMILTPDEGQGDLYRDSLAANLKPGAAIAFAHGLNIHFNLIEPRADIDVFMIAPKGPGHTVRSEYQRGGGVPCLVAVAQNPSGNALDIALSYASAIGGGRAGIIETTFKEECETDLFGEQTVLCGGLVELIKAGFETLVEAGYAPEMAYFECLHEVKLIVDLIYEGGIANMNYSISNTAEYGEYVTGPRMITPETKAEMKRVLDDIQKGRFTRDWMLENKVNQTNFKAMRRANAAHPIEEVGEKLRAMMPWIKKGALVDKTRN.

A KARI N-terminal Rossmann domain is found at 1–182 (MRVYYDSDAD…GGGRAGIIET (182 aa)). Residues 24–27 (YGSQ), Arg-48, Ser-51, and 83–86 (DEGQ) contribute to the NADP(+) site. His-108 is an active-site residue. Gly-134 contacts NADP(+). The KARI C-terminal knotted domain maps to 183-328 (TFKEECETDL…EKLRAMMPWI (146 aa)). Positions 191, 195, 227, and 231 each coordinate Mg(2+). Ser-252 lines the substrate pocket.

Belongs to the ketol-acid reductoisomerase family. Mg(2+) is required as a cofactor.

It carries out the reaction (2R)-2,3-dihydroxy-3-methylbutanoate + NADP(+) = (2S)-2-acetolactate + NADPH + H(+). The enzyme catalyses (2R,3R)-2,3-dihydroxy-3-methylpentanoate + NADP(+) = (S)-2-ethyl-2-hydroxy-3-oxobutanoate + NADPH + H(+). It functions in the pathway amino-acid biosynthesis; L-isoleucine biosynthesis; L-isoleucine from 2-oxobutanoate: step 2/4. Its pathway is amino-acid biosynthesis; L-valine biosynthesis; L-valine from pyruvate: step 2/4. In terms of biological role, involved in the biosynthesis of branched-chain amino acids (BCAA). Catalyzes an alkyl-migration followed by a ketol-acid reduction of (S)-2-acetolactate (S2AL) to yield (R)-2,3-dihydroxy-isovalerate. In the isomerase reaction, S2AL is rearranged via a Mg-dependent methyl migration to produce 3-hydroxy-3-methyl-2-ketobutyrate (HMKB). In the reductase reaction, this 2-ketoacid undergoes a metal-dependent reduction by NADPH to yield (R)-2,3-dihydroxy-isovalerate. The chain is Ketol-acid reductoisomerase (NADP(+)) from Acidiphilium cryptum (strain JF-5).